Consider the following 207-residue polypeptide: Large ribosomal subunit protein bL25 (207 aa).

The protein belongs to the bacterial ribosomal protein bL25 family. CTC subfamily. In terms of assembly, part of the 50S ribosomal subunit; part of the 5S rRNA/L5/L18/L25 subcomplex. Contacts the 5S rRNA. Binds to the 5S rRNA independently of L5 and L18.

In terms of biological role, this is one of the proteins that binds to the 5S RNA in the ribosome where it forms part of the central protuberance. The sequence is that of Large ribosomal subunit protein bL25 from Azorhizobium caulinodans (strain ATCC 43989 / DSM 5975 / JCM 20966 / LMG 6465 / NBRC 14845 / NCIMB 13405 / ORS 571).